The sequence spans 192 residues: Cytidylate kinase (192 aa).

Position 7 to 15 (7 to 15) interacts with ATP; the sequence is GPAGSGKST.

Belongs to the cytidylate kinase family. Type 2 subfamily.

The protein resides in the cytoplasm. The catalysed reaction is CMP + ATP = CDP + ADP. It carries out the reaction dCMP + ATP = dCDP + ADP. The sequence is that of Cytidylate kinase from Haloarcula marismortui (strain ATCC 43049 / DSM 3752 / JCM 8966 / VKM B-1809) (Halobacterium marismortui).